The following is a 334-amino-acid chain: Probable fructose-bisphosphate aldolase class 1 (334 aa).

The protein belongs to the class I fructose-bisphosphate aldolase family.

It catalyses the reaction beta-D-fructose 1,6-bisphosphate = D-glyceraldehyde 3-phosphate + dihydroxyacetone phosphate. Its pathway is carbohydrate degradation; glycolysis; D-glyceraldehyde 3-phosphate and glycerone phosphate from D-glucose: step 4/4. The protein is Probable fructose-bisphosphate aldolase class 1 of Xanthomonas campestris pv. campestris (strain ATCC 33913 / DSM 3586 / NCPPB 528 / LMG 568 / P 25).